The chain runs to 373 residues: Extensin-1 (373 aa).

An N-terminal signal peptide occupies residues 1–19 (MASFLVLAFSLAFVSQTTA). 36 tandem repeats follow at residues 25 to 33 (SPPPPVKHY), 34 to 40 (SPPPVYK), 41 to 49 (SPPPPVKHY), 50 to 56 (SPPPVYK), 57 to 65 (SPPPPVKHY), 66 to 72 (SPPPVYK), 73 to 81 (SPPPPVKYY), 82 to 88 (SPPPVYK), 97 to 105 (SPPPPVKHY), 106 to 112 (SPPPVYK), 113 to 121 (SPPPPVKHY), 122 to 128 (SPPPVYK), 129 to 137 (SPPPPVKHY), 138 to 144 (SPPPVYK), 145 to 153 (SPPPPVKHY), 154 to 160 (SPPPVYK), 161 to 169 (SPPPPVKYY), 170 to 176 (SPPPVYK), 177 to 185 (SPPPPVKHY), 186 to 192 (SPPPVYK), 193 to 201 (SPPPPVKYY), 202 to 208 (SPPPVYK), 209 to 217 (SPPPPVKHY), 218 to 224 (SPPPVYK), 225 to 233 (SPPPPVKYY), 234 to 240 (SPPPVYK), 241 to 248 (SPPPPVHY), 249 to 256 (SPPPVVYH), 257 to 264 (SPPPPVHY), 265 to 272 (SPPPVVYH), 273 to 280 (SPPPPVHY), 281 to 288 (SPPPVVYH), 289 to 296 (SPPPPVHY), 297 to 304 (SPPPVVYH), 305 to 312 (SPPPPVHY), and 313 to 320 (SPPPVVYH). The 13 X 9 AA repeats of S-P-P-P-P-V-K-[HY]-Y stretch occupies residues 25-233 (SPPPPVKHYS…KSPPPPVKYY (209 aa)). Residues 34–240 (SPPPVYKSPP…KYYSPPPVYK (207 aa)) are 13 X 7 AA repeats of S-P-P-P-V-Y-K. The segment at 241 to 312 (SPPPPVHYSP…YHSPPPPVHY (72 aa)) is 5 X 8 AA repeats of S-P-P-P-P-V-H-Y. The 5 X 8 AA repeats of S-P-P-P-V-V-Y-H stretch occupies residues 249–320 (SPPPVVYHSP…HYSPPPVVYH (72 aa)). Isodityrosine cross-linking regions lie at residues 329–332 (YEYK) and 363–366 (YLYK). A disordered region spans residues 349-373 (PPPPVHHYSPPHQPYLYKSPPPPHY).

Belongs to the extensin family. In terms of processing, extensins contain a characteristic repeat of the pentapeptide Ser-Pro(4). For this particular extensin, a typical repeat of Ser-Pro(3) is found. In both cases, the proline residues are hydroxylated and then O-glycosylated (arabinosylation). Synthetised as soluble proteins which become insolubilised in the cell wall through the intermolecular cross-linking of Tyr on adjacent monomers. Isodityrosine (IDT) stabilizes and makes rigid the part of the polypeptide where IDT functional sites are present. As to expression, predominantly expressed in the roots. Not detected in the leaves, nor in flowers or flower buds. Wounding reverses this pattern, turning on the gene in the leaves and repressing it in the roots.

The protein resides in the secreted. It localises to the primary cell wall. Functionally, structural component which strengthens the primary cell wall. The polypeptide is Extensin-1 (Arabidopsis thaliana (Mouse-ear cress)).